The sequence spans 451 residues: Serine/threonine-protein kinase VRK3 (451 aa).

Disordered regions lie at residues 28-61 and 74-125; these read KHEG…SKKV and LPSE…MTAS. Positions 32–45 are enriched in polar residues; sequence SQSFVKPFTSSSQG. A Nuclear localization signal motif is present at residues 47–62; the sequence is RRKTNTSSETSSKKVK. Phosphoserine occurs at positions 53, 57, 80, 81, 88, and 106. The span at 78 to 91 shows a compositional bias: polar residues; the sequence is GKSSGSEDTLSTSG. Residues 98–116 show a composition bias toward low complexity; sequence SRSPTPRSSPQTTRQSPQT. Residues 123–434 enclose the Protein kinase domain; that stretch reads TASLEALPVG…TLRNELEALL (312 aa).

The protein belongs to the protein kinase superfamily. CK1 Ser/Thr protein kinase family. VRK subfamily. As to quaternary structure, interacts with DUSP3. Interacts with RAN. Interacts with HSP70/HSPA1A. Post-translationally, phosphorylated at Ser-106 by CDK5; leading to protection of the cell against H2O2-induced apoptosis. Ubiquitinated by RNF144A.

The protein localises to the nucleus. It localises to the cytoplasm. The enzyme catalyses L-seryl-[protein] + ATP = O-phospho-L-seryl-[protein] + ADP + H(+). Its function is as follows. Plays a role in the regulation of the cell cycle by phosphorylating the nuclear envelope protein barrier-to-autointegration factor/BAF that is required for disassembly and reassembly, respectively, of the nuclear envelope during mitosis. Under normal physiological conditions, negatively regulates ERK activity along with VHR phosphatase in the nucleus, causing timely and transient action of ERK. Stress conditions activate CDK5 which phosphorylates VRK3 to increase VHR phosphatase activity and suppress prolonged ERK activation that causes cell death. For example, upon glutamate induction, promotes nuclear localization of HSP70/HSPA1A to inhibit ERK activation via VHR phosphatase. The protein is Serine/threonine-protein kinase VRK3 (VRK3) of Bos taurus (Bovine).